The sequence spans 272 residues: ATP synthase subunit a (272 aa).

5 helical membrane-spanning segments follow: residues 41-61, 101-121, 147-167, 212-232, and 243-263; these read TLNIDSMFFSVVLGLLFLVLF, LIAPLALTIFVWVFLMNLMDL, DVNITLSMALGVFILILFYSI, LFGNMYAGELIFILIAGLLPW, and AIFHILIITLQAFIFMVLTIV.

Belongs to the ATPase A chain family. In terms of assembly, F-type ATPases have 2 components, CF(1) - the catalytic core - and CF(0) - the membrane proton channel. CF(1) has five subunits: alpha(3), beta(3), gamma(1), delta(1), epsilon(1). CF(0) has three main subunits: a(1), b(2) and c(9-12). The alpha and beta chains form an alternating ring which encloses part of the gamma chain. CF(1) is attached to CF(0) by a central stalk formed by the gamma and epsilon chains, while a peripheral stalk is formed by the delta and b chains.

Its subcellular location is the cell inner membrane. In terms of biological role, key component of the proton channel; it plays a direct role in the translocation of protons across the membrane. In Cronobacter sakazakii (strain ATCC BAA-894) (Enterobacter sakazakii), this protein is ATP synthase subunit a.